A 66-amino-acid chain; its full sequence is Large ribosomal subunit protein bL33c (66 aa).

Belongs to the bacterial ribosomal protein bL33 family.

The protein resides in the plastid. The protein localises to the chloroplast. The sequence is that of Large ribosomal subunit protein bL33c from Aethionema cordifolium (Lebanon stonecress).